A 367-amino-acid chain; its full sequence is MKTSHLIRIALPGALAAALLASQVSQAADLVPPPGYYAAVGERKGSAGSCPAVPPPYTGSLVFTSKYEGSDSARATLNVKAEKTFRSQIKDITDMERGATKLVTQYMRSGRDGDLACALNWMSAWARAGALQSDDFNHTGKSMRKWALGSLSGAYMRLKFSSSRPLAAHAEQSREIEDWFARLGTQVVRDWSGLPLKKINNHSYWAAWSVMSTAVVTNRRDLFDWAVSEFKVAANQVDEQGFLPNELKRRQRALAYHNYALPPLAMIAAFAQVNGVDLRQENHGALQRLAERVMKGVDDEETFEEKTGEDQDMTDLKVDNKYAWLEPYCALYRCEPKMLEAKKDREPFNSFRLGGEVTRVFSREGGS.

An N-terminal signal peptide occupies residues 1-27; the sequence is MKTSHLIRIALPGALAAALLASQVSQA. Substrate is bound by residues 65 to 66, 138 to 139, and Y256; these read SK and HT.

The protein belongs to the polysaccharide lyase 5 family.

Its subcellular location is the periplasm. It carries out the reaction Eliminative cleavage of alginate to give oligosaccharides with 4-deoxy-alpha-L-erythro-hex-4-enuronosyl groups at their non-reducing ends and beta-D-mannuronate at their reducing end.. Its function is as follows. Catalyzes the depolymerization of alginate by cleaving the beta-1,4 glycosidic bond between two adjacent sugar residues via a beta-elimination mechanism. May serve to degrade mislocalized alginate that is trapped in the periplasmic space. Acts preferentially on non-acetylated alginate or its precursor mannuronan. Is able to catalyze cleavage adjacent to either mannuronate or guluronate residues in alginate. Exhaustive digestion of alginate by AlgL generates dimeric and trimeric products. In addition to its enzymatic function, AlgL appears to be required for alginate export, maybe as part of a multi-protein alginate-secretion complex. In Pseudomonas aeruginosa (strain ATCC 15692 / DSM 22644 / CIP 104116 / JCM 14847 / LMG 12228 / 1C / PRS 101 / PAO1), this protein is Alginate lyase.